Reading from the N-terminus, the 241-residue chain is Phosphoribosylaminoimidazole-succinocarboxamide synthase (241 aa).

The protein belongs to the SAICAR synthetase family.

It carries out the reaction 5-amino-1-(5-phospho-D-ribosyl)imidazole-4-carboxylate + L-aspartate + ATP = (2S)-2-[5-amino-1-(5-phospho-beta-D-ribosyl)imidazole-4-carboxamido]succinate + ADP + phosphate + 2 H(+). Its pathway is purine metabolism; IMP biosynthesis via de novo pathway; 5-amino-1-(5-phospho-D-ribosyl)imidazole-4-carboxamide from 5-amino-1-(5-phospho-D-ribosyl)imidazole-4-carboxylate: step 1/2. This Lacticaseibacillus paracasei (strain ATCC 334 / BCRC 17002 / CCUG 31169 / CIP 107868 / KCTC 3260 / NRRL B-441) (Lactobacillus paracasei) protein is Phosphoribosylaminoimidazole-succinocarboxamide synthase.